A 627-amino-acid polypeptide reads, in one-letter code: Neuronal acetylcholine receptor subunit alpha-4 (627 aa).

The first 31 residues, Met-1–Pro-31, serve as a signal peptide directing secretion. The Extracellular portion of the chain corresponds to Val-32–Leu-244. The N-linked (GlcNAc...) asparagine glycan is linked to Asn-59. Ca(2+) is bound by residues Val-78 and Glu-80. Residues Asn-109 and Asn-176 are each glycosylated (N-linked (GlcNAc...) asparagine). Intrachain disulfides connect Cys-163–Cys-177 and Cys-227–Cys-228. The helical transmembrane segment at Pro-245–Leu-269 threads the bilayer. Cys-273 is lipidated: S-palmitoyl cysteine. The next 2 membrane-spanning stretches (helical) occupy residues Val-277 to Thr-295 and Tyr-311 to Val-332. Residues His-333–Arg-600 lie on the Cytoplasmic side of the membrane. Over residues Pro-384–Gly-399 the composition is skewed to low complexity. The segment at Pro-384–Leu-463 is disordered. Ser-427 carries the post-translational modification Phosphoserine. Pro residues predominate over residues Ser-444 to Thr-458. Residue Ser-541 is modified to Phosphoserine. The chain crosses the membrane as a helical span at residues Ile-601–Leu-619.

It belongs to the ligand-gated ion channel (TC 1.A.9) family. Acetylcholine receptor (TC 1.A.9.1) subfamily. Alpha-4/CHRNA4 sub-subfamily. In terms of assembly, neuronal AChR is composed of two different types of subunits: alpha and beta. CHRNA4 forms heteropentameric neuronal acetylcholine receptors with CHRNB2 and CHRNB4, as well as CHRNA5 and CHRNB3 as accesory subunits. Found in two major stoichiometric forms, LS (low agonist sensitivity): (CHRNA4)3:(CHRNB2)2 and HS (high agonist sensitivity): (CHRNA4)2:(CHRNB2)3, the two stoichiometric forms differ in their unitary conductance, calcium permeability, ACh sensitivity and potentiation by divalent cation. Cells produce predominantly an (CHRNA4)3:(CHRNB2)2 nAChR. The (CHRNA4)2:(CHRNB2)3 expression is selectively up-regulated by nicotine and has lower single channel conductance and calcium permeability. In the striatum, also forms CHRNA4:CHRNA6:CHRNB2 complexes. Also found in the stoichiometric form: (CHRNA4:CHRNB2)2:CHRNB3. Interacts with RIC3; which is required for proper folding and assembly. Interacts with LYPD6.

The protein resides in the synaptic cell membrane. The protein localises to the cell membrane. It catalyses the reaction Ca(2+)(in) = Ca(2+)(out). The enzyme catalyses K(+)(in) = K(+)(out). It carries out the reaction Na(+)(in) = Na(+)(out). Activated by a myriad of ligands such as acetylcholine, cytisine, nicotine, choline and epibatidine. Channel potentiation by calcium is stoichiometry-selective, CHRNA4:CHRNB2 nACh receptor is achieved by calcium association with topographically distinct sites framed by anionic residues within the CHRNA4 subunit and between the CHRNA4 and CHRNB2 subunits. nAChR activity is inhibited by the antagonist alpha-conotoxins BuIA, PnIA, GID and MII, small disulfide-constrained peptides from cone snails. In terms of biological role, component of neuronal acetylcholine receptors (nAChRs) that function as pentameric, ligand-gated cation channels with high calcium permeability among other activities. nAChRs are excitatory neurotrasnmitter receptors formed by a collection of nAChR subunits known to mediate synaptic transmission in the nervous system and the neuromuscular junction. Each nAchR subunit confers differential attributes to channel properties, including activation, deactivation and desensitization kinetics, pH sensitivity, cation permeability, and binding to allosteric modulators. CHRNA4 forms heteropentameric neuronal acetylcholine receptors with CHRNB2 and CHRNB4, as well as CHRNA5 and CHRNB3 as accesory subunits. Is the most abundant nAChR subtype expressed in the central nervous system. Found in two major stoichiometric forms,(CHRNA4)3:(CHRNB2)2 and (CHRNA4)2:(CHRNB2)3, the two stoichiometric forms differ in their unitary conductance, calcium permeability, ACh sensitivity and potentiation by divalent cation. Involved in the modulation of calcium-dependent signaling pathways, influences the release of neurotransmitters, including dopamine, glutamate and GABA. The protein is Neuronal acetylcholine receptor subunit alpha-4 (CHRNA4) of Mustela putorius furo (European domestic ferret).